The chain runs to 555 residues: 2-isopropylmalate synthase (555 aa).

One can recognise a Pyruvate carboxyltransferase domain in the interval P30 to N303. 4 residues coordinate Mg(2+): D39, H242, H244, and N278. The tract at residues Q437–K555 is regulatory domain.

Belongs to the alpha-IPM synthase/homocitrate synthase family. LeuA type 2 subfamily. In terms of assembly, homodimer. Mg(2+) serves as cofactor.

The protein localises to the cytoplasm. The enzyme catalyses 3-methyl-2-oxobutanoate + acetyl-CoA + H2O = (2S)-2-isopropylmalate + CoA + H(+). It participates in amino-acid biosynthesis; L-leucine biosynthesis; L-leucine from 3-methyl-2-oxobutanoate: step 1/4. Catalyzes the condensation of the acetyl group of acetyl-CoA with 3-methyl-2-oxobutanoate (2-ketoisovalerate) to form 3-carboxy-3-hydroxy-4-methylpentanoate (2-isopropylmalate). The sequence is that of 2-isopropylmalate synthase from Brucella melitensis biotype 1 (strain ATCC 23456 / CCUG 17765 / NCTC 10094 / 16M).